Reading from the N-terminus, the 104-residue chain is Large ribosomal subunit protein bL21 (104 aa).

The protein belongs to the bacterial ribosomal protein bL21 family. As to quaternary structure, part of the 50S ribosomal subunit. Contacts protein L20.

Its function is as follows. This protein binds to 23S rRNA in the presence of protein L20. In Tropheryma whipplei (strain Twist) (Whipple's bacillus), this protein is Large ribosomal subunit protein bL21.